The sequence spans 420 residues: Reticulon-4 receptor-like 2 (420 aa).

An N-terminal signal peptide occupies residues 1–30 (MLPGLRRLLQGPASACLLLTLLALPSVTPS). Intrachain disulfides connect cysteine 31–cysteine 37 and cysteine 35–cysteine 46. Residues 31–60 (CPMLCTCYSSPPTVSCQANNFSSVPLSLPP) form the LRRNT domain. A glycan (N-linked (GlcNAc...) asparagine) is linked at asparagine 50. 8 LRR repeats span residues 61-82 (STQRLFLQNNLIRSLRPGTFGP), 83-104 (NLLTLWLFSNNLSTIHPGTFRH), 107-129 (ALEELDLGDNRHLRSLEPDTFQG), 132-153 (RLQSLHLYRCQLSSLPGNIFRG), 156-177 (SLQYLYLQENSLLHLQDDLFAD), 180-201 (NLSHLFLHGNRLRLLTEHVFRG), 204-225 (SLDRLLLHGNRLQGVHRAAFHG), and 228-249 (RLTILYLFNNSLASLPGEALAD). Asparagine 93 carries N-linked (GlcNAc...) asparagine glycosylation. A glycan (N-linked (GlcNAc...) asparagine) is linked at asparagine 236. The 52-residue stretch at 261 to 312 (NPWACDCRARPLWAWFQRARVSSSDVTCATPPERQGRDLRALRDSDFQACPP) folds into the LRRCT domain. 2 disulfide bridges follow: cysteine 265–cysteine 288 and cysteine 267–cysteine 310. The segment at 286–399 (VTCATPPERQ…CQAPADSRGP (114 aa)) is disordered. Basic and acidic residues predominate over residues 294 to 306 (RQGRDLRALRDSD). The segment at 315 to 327 (PTRPGSRARGNSS) is important for interaction with MAG. Residues 351–360 (LPAEDSRGRQ) are compositionally biased toward basic and acidic residues. Glycine 398 is lipidated: GPI-anchor amidated glycine. A propeptide spans 399 to 420 (PALSAGLRTPLLCLLPLALHHL) (removed in mature form).

This sequence belongs to the Nogo receptor family. As to quaternary structure, interaction with MAG is controversial, and may be indirect. Interacts with MAG. Does not interact with OMG and RTN4. Undergoes zinc metalloproteinase-mediated ectodomain shedding in neuroblastoma cells; is released both as a full-length ectodomain and an N-terminal fragment containing the leucine-rich repeat (LRR) region of the protein. In terms of processing, N-glycosylated. In terms of tissue distribution, detected in brain. Detected in hippocampus neurons (at protein level).

It localises to the cell membrane. The protein resides in the membrane raft. It is found in the cell projection. Its subcellular location is the dendrite. The protein localises to the axon. It localises to the perikaryon. In terms of biological role, cell surface receptor that plays a functionally redundant role in the inhibition of neurite outgrowth mediated by MAG. Plays a functionally redundant role in postnatal brain development. Contributes to normal axon migration across the brain midline and normal formation of the corpus callosum. Does not seem to play a significant role in regulating axon regeneration in the adult central nervous system. Protects motoneurons against apoptosis; protection against apoptosis is probably mediated by MAG. Like other family members, plays a role in restricting the number dendritic spines and the number of synapses that are formed during brain development. Signaling mediates activation of Rho and downstream reorganization of the actin cytoskeleton. In Mus musculus (Mouse), this protein is Reticulon-4 receptor-like 2.